Consider the following 132-residue polypeptide: UPF0212 protein PYRAB08340 (132 aa).

The protein belongs to the UPF0212 family.

The chain is UPF0212 protein PYRAB08340 from Pyrococcus abyssi (strain GE5 / Orsay).